We begin with the raw amino-acid sequence, 112 residues long: Nitrogenase-stabilizing/protective protein NifW (112 aa).

It belongs to the NifW family. In terms of assembly, homotrimer; associates with NifD.

May protect the nitrogenase Fe-Mo protein from oxidative damage. This chain is Nitrogenase-stabilizing/protective protein NifW, found in Burkholderia vietnamiensis (strain G4 / LMG 22486) (Burkholderia cepacia (strain R1808)).